The chain runs to 146 residues: MKYQKSAEAIAKLSAEQYRVTQENGTERPGTGEYLYNKEPGIYVDIVSGEPLFASSDKYESHCGWPSFTKPIERANVTELTDMSHGMVRTEVRSAHGDSHLGHVFPDGPVDRGGLRYCINSASLRFVPKDRMEAEGYGDYLDQVEG.

The 124-residue stretch at 6–129 (SAEAIAKLSA…NSASLRFVPK (124 aa)) folds into the MsrB domain. C118 functions as the Nucleophile in the catalytic mechanism.

It belongs to the MsrB Met sulfoxide reductase family.

It carries out the reaction L-methionyl-[protein] + [thioredoxin]-disulfide + H2O = L-methionyl-(R)-S-oxide-[protein] + [thioredoxin]-dithiol. The chain is Peptide methionine sulfoxide reductase MsrB from Brucella melitensis biotype 1 (strain ATCC 23456 / CCUG 17765 / NCTC 10094 / 16M).